A 260-amino-acid chain; its full sequence is Indole-3-glycerol phosphate synthase (260 aa).

It belongs to the TrpC family.

The catalysed reaction is 1-(2-carboxyphenylamino)-1-deoxy-D-ribulose 5-phosphate + H(+) = (1S,2R)-1-C-(indol-3-yl)glycerol 3-phosphate + CO2 + H2O. The protein operates within amino-acid biosynthesis; L-tryptophan biosynthesis; L-tryptophan from chorismate: step 4/5. The polypeptide is Indole-3-glycerol phosphate synthase (Lactiplantibacillus plantarum (strain ATCC BAA-793 / NCIMB 8826 / WCFS1) (Lactobacillus plantarum)).